The chain runs to 109 residues: Putative membrane protein insertion efficiency factor (109 aa).

The protein belongs to the UPF0161 family.

It is found in the cell inner membrane. Functionally, could be involved in insertion of integral membrane proteins into the membrane. This is Putative membrane protein insertion efficiency factor from Rhodopseudomonas palustris (strain BisB18).